The sequence spans 572 residues: Methionine--tRNA ligase (572 aa).

A 'HIGH' region motif is present at residues 11–21; the sequence is PYVNHVPHLGT. Zn(2+) contacts are provided by Cys143, Cys146, Cys156, and Cys159. The 'KMSKS' region signature appears at 334–338; sequence QFSKS. Residue Lys337 participates in ATP binding.

This sequence belongs to the class-I aminoacyl-tRNA synthetase family. MetG type 1 subfamily. Zn(2+) is required as a cofactor.

Its subcellular location is the cytoplasm. The catalysed reaction is tRNA(Met) + L-methionine + ATP = L-methionyl-tRNA(Met) + AMP + diphosphate. Its function is as follows. Is required not only for elongation of protein synthesis but also for the initiation of all mRNA translation through initiator tRNA(fMet) aminoacylation. In Aeropyrum pernix (strain ATCC 700893 / DSM 11879 / JCM 9820 / NBRC 100138 / K1), this protein is Methionine--tRNA ligase (metG).